The following is a 243-amino-acid chain: Myelin protein P0 (243 aa).

An N-terminal signal peptide occupies residues 1–26 (MESSGLRAPCSLLVLLSALVLPPTLA). One can recognise an Ig-like V-type domain in the interval 27–141 (IEVYTDREVY…VGKSSYVHLQ (115 aa)). Over 27 to 154 (IEVYTDREVY…KGAARAGLVL (128 aa)) the chain is Extracellular. A disulfide bond links cysteine 47 and cysteine 123. Asparagine 118 is a glycosylation site (N-linked (GlcNAc...) asparagine). The helical transmembrane segment at 155-175 (GIIIAVALALVIVVTILILLI) threads the bilayer. Residues 176 to 243 (RYCWLRRQVR…GIGDSRKDRK (68 aa)) are Cytoplasmic-facing. The interval 201-243 (AKDSSKRSSRQTPILYAMLDQTRGKASEKKGKGGIGDSRKDRK) is disordered. The span at 222–243 (TRGKASEKKGKGGIGDSRKDRK) shows a compositional bias: basic and acidic residues.

This sequence belongs to the myelin P0 protein family.

The protein localises to the cell membrane. Its function is as follows. Creation of an extracellular membrane face which guides the wrapping process and ultimately compacts adjacent lamellae. This chain is Myelin protein P0 (mpz), found in Xenopus tropicalis (Western clawed frog).